The following is a 153-amino-acid chain: Endoribonuclease YbeY (153 aa).

Residues histidine 114, histidine 118, and histidine 124 each contribute to the Zn(2+) site.

Belongs to the endoribonuclease YbeY family. The cofactor is Zn(2+).

The protein resides in the cytoplasm. Single strand-specific metallo-endoribonuclease involved in late-stage 70S ribosome quality control and in maturation of the 3' terminus of the 16S rRNA. The chain is Endoribonuclease YbeY from Shewanella sp. (strain MR-7).